The chain runs to 201 residues: Imidazole glycerol phosphate synthase subunit HisH (201 aa).

The Glutamine amidotransferase type-1 domain occupies 1 to 201; that stretch reads MVFIADYGAG…LKVLANFAEL (201 aa). Catalysis depends on Cys79, which acts as the Nucleophile. Active-site residues include His183 and Glu185.

Heterodimer of HisH and HisF.

It is found in the cytoplasm. The catalysed reaction is 5-[(5-phospho-1-deoxy-D-ribulos-1-ylimino)methylamino]-1-(5-phospho-beta-D-ribosyl)imidazole-4-carboxamide + L-glutamine = D-erythro-1-(imidazol-4-yl)glycerol 3-phosphate + 5-amino-1-(5-phospho-beta-D-ribosyl)imidazole-4-carboxamide + L-glutamate + H(+). The enzyme catalyses L-glutamine + H2O = L-glutamate + NH4(+). Its pathway is amino-acid biosynthesis; L-histidine biosynthesis; L-histidine from 5-phospho-alpha-D-ribose 1-diphosphate: step 5/9. In terms of biological role, IGPS catalyzes the conversion of PRFAR and glutamine to IGP, AICAR and glutamate. The HisH subunit catalyzes the hydrolysis of glutamine to glutamate and ammonia as part of the synthesis of IGP and AICAR. The resulting ammonia molecule is channeled to the active site of HisF. The protein is Imidazole glycerol phosphate synthase subunit HisH of Chlorobium chlorochromatii (strain CaD3).